The chain runs to 391 residues: Probable sugar efflux transporter (391 aa).

Transmembrane regions (helical) follow at residues 16–36 (VFVF…PVAL), 51–71 (VGLM…PLML), 82–102 (LLFL…AWNF), 103–123 (WVLL…WSIT), 138–158 (QALG…LPLG), 170–190 (TFGV…KLLP), 210–230 (PLLV…FTTY), 247–267 (ITTL…FLFG), 277–297 (FIAF…VFKN), 300–320 (WVIF…TIAL), 338–358 (IFSG…SIVI), and 361–381 (LGLE…LFWL).

This sequence belongs to the major facilitator superfamily. SotB (TC 2.A.1.2) family.

Its subcellular location is the cell inner membrane. Its function is as follows. Involved in the efflux of sugars. The physiological role may be the reduction of the intracellular concentration of toxic sugars or sugar metabolites. The chain is Probable sugar efflux transporter from Helicobacter pylori (strain P12).